A 499-amino-acid chain; its full sequence is Thermostable carboxypeptidase 1 (499 aa).

Positions 6–499 (QNETIKQILA…FVRWVKEKYL (494 aa)) constitute a Peptidase M32 domain. Residues 238 to 240 (HPF) carry the HPF motif. A DXRXT motif is present at residues 248–252 (DVRIT). His-269 serves as a coordination point for Co(2+). The short motif at 269–273 (HEFGH) is the HEXXH element. Glu-270 serves as the catalytic Proton donor/acceptor. 2 residues coordinate Co(2+): His-273 and Glu-299. The HES/GQ motif lies at 298–301 (HESQ). The I/NRXXA/SD signature appears at 350-355 (IRTEAD). The GXXQDXHW signature appears at 405–412 (GILQDIHW).

This sequence belongs to the peptidase M32 family. Homodimer. It depends on Co(2+) as a cofactor. Mn(2+) is required as a cofactor.

It carries out the reaction Release of a C-terminal amino acid with broad specificity, except for -Pro.. Its activity is regulated as follows. EDTA and DTT reversibly abolish carboxypeptidase activity. Broad specificity carboxypetidase that releases amino acids sequentially from the C-terminus, including neutral, aromatic, polar and basic residues, but not Pro, Gly, Asp and Glu. This chain is Thermostable carboxypeptidase 1, found in Pyrococcus furiosus (strain ATCC 43587 / DSM 3638 / JCM 8422 / Vc1).